Reading from the N-terminus, the 72-residue chain is Large ribosomal subunit protein uL29 (72 aa).

This sequence belongs to the universal ribosomal protein uL29 family.

The chain is Large ribosomal subunit protein uL29 from Prochlorococcus marinus (strain MIT 9215).